Consider the following 151-residue polypeptide: MVSANQTASVTEFILLGLSAHPKLEKTFFVLILLMYLVILLGNGVLILMTVSNSHLHMPMYFFLGNLSFLDICYTTSSVPLILDSFLTPRKTISFSACAVQMFLSFAMGATECVLLSMMAFDRYVAICNPLRYPVVMSKAAYMPIRLPAPG.

At 1–27 (MVSANQTASVTEFILLGLSAHPKLEKT) the chain is on the extracellular side. Asparagine 5 carries an N-linked (GlcNAc...) asparagine glycan. A helical transmembrane segment spans residues 28–48 (FFVLILLMYLVILLGNGVLIL). At 49–61 (MTVSNSHLHMPMY) the chain is on the cytoplasmic side. A helical membrane pass occupies residues 62–82 (FFLGNLSFLDICYTTSSVPLI). The Extracellular portion of the chain corresponds to 83 to 100 (LDSFLTPRKTISFSACAV). A helical membrane pass occupies residues 101-121 (QMFLSFAMGATECVLLSMMAF).

Belongs to the G-protein coupled receptor 1 family.

It localises to the cell membrane. Odorant receptor. The sequence is that of Putative olfactory receptor 13C6 from Homo sapiens (Human).